We begin with the raw amino-acid sequence, 709 residues long: Leucine-rich repeat and calponin homology domain-containing protein 1 (709 aa).

Basic residues predominate over residues 24–37; sequence LHQHHQHHQHHQHH. Residues 24–49 are disordered; that stretch reads LHQHHQHHQHHQHHGGTGGTGFNLPL. LRR repeat units follow at residues 60–83, 86–108, 109–131, 132–155, 157–176, 177–199, 200–223, 225–244, and 245–268; these read AANSGGLNLSARKLKEFPRTTAPG, LSDTVRADLSKNRLVEVPMELCQ, FVSLEILNLYHNCIRVIPEAIVN, LQMLTHLNLSRNQLSALPACLCGL, LKVLIASNNKLGSLPEEIGQ, LKQLMELDVSCNEITALPQQIGQ, LKSLRELNVRRNYLKVLPPELVDL, LVKFDFSCNKVLVIPVCFRE, and MKQLQVLLLENNPLQSPPAQICTK. Basic and acidic residues-rich tracts occupy residues 301 to 312 and 381 to 390; these read HQHVEDSKKDSD and QEREQLAGRA. The interval 301 to 390 is disordered; the sequence is HQHVEDSKKD…QEREQLAGRA (90 aa). Residues serine 395, serine 518, and serine 522 each carry the phosphoserine modification. The interval 504 to 526 is disordered; the sequence is SNGSQYSPNEIRENSPSVSPTAN. Phosphothreonine is present on threonine 581. The 114-residue stretch at 589–702 folds into the Calponin-homology (CH) domain; it reads MREEKELVEQ…TTVQALLDVT (114 aa).

In terms of assembly, interacts (via LRR repeats) with unphosphorylated DOCK8 (via DHR-2 domain); the interaction prevents the association between DOCK8 and CDC42.

It is found in the cytoplasm. In terms of biological role, acts as a negative regulator of GTPase CDC42 by sequestering CDC42-guanine exchange factor DOCK8. Probably by preventing CDC42 activation, negatively regulates CD4(+) T-cell migration in response to chemokine stimulation. The sequence is that of Leucine-rich repeat and calponin homology domain-containing protein 1 (Lrch1) from Mus musculus (Mouse).